The chain runs to 205 residues: SREBP regulating gene protein (205 aa).

The Cytoplasmic portion of the chain corresponds to 1 to 16 (MVNLAAMVWRRLLRKR). A helical membrane pass occupies residues 17–35 (WVLALVFGLSLVYFLTSTF). Residues 36-205 (KQEERAVRDR…GESPPELFPA (170 aa)) lie on the Lumenal side of the membrane. Asn67 carries N-linked (GlcNAc...) asparagine glycosylation.

Belongs to the SPRING family. Interacts with SCAP.

It is found in the golgi apparatus membrane. Its function is as follows. Positively regulates hepatic SREBP signaling pathway by modulating the proper localization of SCAP (SREBP cleavage-activating protein) to the endoplasmic reticulum, thereby controlling the level of functional SCAP. In Bos taurus (Bovine), this protein is SREBP regulating gene protein.